The following is a 194-amino-acid chain: ATP-dependent Clp protease proteolytic subunit 1 (194 aa).

Serine 99 serves as the catalytic Nucleophile. The active site involves histidine 124.

It belongs to the peptidase S14 family. In terms of assembly, fourteen ClpP subunits assemble into 2 heptameric rings which stack back to back to give a disk-like structure with a central cavity, resembling the structure of eukaryotic proteasomes.

Its subcellular location is the cytoplasm. It carries out the reaction Hydrolysis of proteins to small peptides in the presence of ATP and magnesium. alpha-casein is the usual test substrate. In the absence of ATP, only oligopeptides shorter than five residues are hydrolyzed (such as succinyl-Leu-Tyr-|-NHMec, and Leu-Tyr-Leu-|-Tyr-Trp, in which cleavage of the -Tyr-|-Leu- and -Tyr-|-Trp bonds also occurs).. In terms of biological role, cleaves peptides in various proteins in a process that requires ATP hydrolysis. Has a chymotrypsin-like activity. Plays a major role in the degradation of misfolded proteins. This chain is ATP-dependent Clp protease proteolytic subunit 1, found in Borreliella burgdorferi (strain ATCC 35210 / DSM 4680 / CIP 102532 / B31) (Borrelia burgdorferi).